The following is a 194-amino-acid chain: 7-methyl-GTP pyrophosphatase (194 aa).

Catalysis depends on Asp70, which acts as the Proton acceptor.

Belongs to the Maf family. YceF subfamily. A divalent metal cation is required as a cofactor.

The protein resides in the cytoplasm. It carries out the reaction N(7)-methyl-GTP + H2O = N(7)-methyl-GMP + diphosphate + H(+). Functionally, nucleoside triphosphate pyrophosphatase that hydrolyzes 7-methyl-GTP (m(7)GTP). May have a dual role in cell division arrest and in preventing the incorporation of modified nucleotides into cellular nucleic acids. In Ralstonia nicotianae (strain ATCC BAA-1114 / GMI1000) (Ralstonia solanacearum), this protein is 7-methyl-GTP pyrophosphatase.